We begin with the raw amino-acid sequence, 144 residues long: Peptide methionine sulfoxide reductase B7 (144 aa).

Residues 19–140 form the MsrB domain; it reads DEEWRAVLSP…NSVSLKFSSA (122 aa). Residues Cys58, Cys61, Cys104, and Cys107 each contribute to the Zn(2+) site. Cys76 and Cys129 are disulfide-bonded. Catalysis depends on Cys129, which acts as the Nucleophile.

This sequence belongs to the MsrB Met sulfoxide reductase family. Zn(2+) serves as cofactor.

It is found in the cytoplasm. Its subcellular location is the cytosol. The enzyme catalyses L-methionyl-[protein] + [thioredoxin]-disulfide + H2O = L-methionyl-(R)-S-oxide-[protein] + [thioredoxin]-dithiol. In terms of biological role, catalyzes the reduction of methionine sulfoxide (MetSO) to methionine in proteins. Plays a protective role against oxidative stress by restoring activity to proteins that have been inactivated by methionine oxidation. MSRB family specifically reduces the MetSO R-enantiomer. The protein is Peptide methionine sulfoxide reductase B7 (MSRB7) of Arabidopsis thaliana (Mouse-ear cress).